We begin with the raw amino-acid sequence, 281 residues long: Protein synthesis inhibitor I (281 aa).

Alanine 2 carries the post-translational modification N-acetylalanine. The active site involves glutamate 175.

Belongs to the ribosome-inactivating protein family. Type 1 RIP subfamily.

The protein resides in the cytoplasm. It catalyses the reaction Endohydrolysis of the N-glycosidic bond at one specific adenosine on the 28S rRNA.. In terms of biological role, inhibits the elongation phase of protein synthesis. It inactivates fungal ribosomes even more effectively than mammalian ribosomes and is thought to function as a constitutive antifungal agent in plants. This is Protein synthesis inhibitor I (RIP30) from Hordeum vulgare (Barley).